Consider the following 500-residue polypeptide: L-arabinose isomerase (500 aa).

Residues Glu-306, Glu-333, His-350, and His-450 each coordinate Mn(2+).

It belongs to the arabinose isomerase family. In terms of assembly, homohexamer. Mn(2+) is required as a cofactor.

It carries out the reaction beta-L-arabinopyranose = L-ribulose. It functions in the pathway carbohydrate degradation; L-arabinose degradation via L-ribulose; D-xylulose 5-phosphate from L-arabinose (bacterial route): step 1/3. Catalyzes the conversion of L-arabinose to L-ribulose. The protein is L-arabinose isomerase of Escherichia coli O17:K52:H18 (strain UMN026 / ExPEC).